A 153-amino-acid polypeptide reads, in one-letter code: 6,7-dimethyl-8-ribityllumazine synthase (153 aa).

Residues F21, 55–57, and 79–81 each bind 5-amino-6-(D-ribitylamino)uracil; these read AFE and TVI. 84-85 contacts (2S)-2-hydroxy-3-oxobutyl phosphate; the sequence is AT. H87 (proton donor) is an active-site residue. Residue F112 participates in 5-amino-6-(D-ribitylamino)uracil binding. R126 lines the (2S)-2-hydroxy-3-oxobutyl phosphate pocket.

It belongs to the DMRL synthase family. As to quaternary structure, forms an icosahedral capsid composed of 60 subunits, arranged as a dodecamer of pentamers.

It catalyses the reaction (2S)-2-hydroxy-3-oxobutyl phosphate + 5-amino-6-(D-ribitylamino)uracil = 6,7-dimethyl-8-(1-D-ribityl)lumazine + phosphate + 2 H2O + H(+). It participates in cofactor biosynthesis; riboflavin biosynthesis; riboflavin from 2-hydroxy-3-oxobutyl phosphate and 5-amino-6-(D-ribitylamino)uracil: step 1/2. In terms of biological role, catalyzes the formation of 6,7-dimethyl-8-ribityllumazine by condensation of 5-amino-6-(D-ribitylamino)uracil with 3,4-dihydroxy-2-butanone 4-phosphate. This is the penultimate step in the biosynthesis of riboflavin. This is 6,7-dimethyl-8-ribityllumazine synthase from Bacillus cereus (strain B4264).